A 308-amino-acid chain; its full sequence is Ribosomal protein uL3 glutamine methyltransferase (308 aa).

It belongs to the protein N5-glutamine methyltransferase family. PrmB subfamily.

The enzyme catalyses L-glutaminyl-[ribosomal protein uL3] + S-adenosyl-L-methionine = N(5)-methyl-L-glutaminyl-[ribosomal protein uL3] + S-adenosyl-L-homocysteine + H(+). Its function is as follows. Methylates large ribosomal subunit protein uL3 on a specific glutamine residue. This Xanthomonas campestris pv. campestris (strain ATCC 33913 / DSM 3586 / NCPPB 528 / LMG 568 / P 25) protein is Ribosomal protein uL3 glutamine methyltransferase.